Reading from the N-terminus, the 502-residue chain is Aspartyl/glutamyl-tRNA(Asn/Gln) amidotransferase subunit B (502 aa).

The protein belongs to the GatB/GatE family. GatB subfamily. As to quaternary structure, heterotrimer of A, B and C subunits.

The catalysed reaction is L-glutamyl-tRNA(Gln) + L-glutamine + ATP + H2O = L-glutaminyl-tRNA(Gln) + L-glutamate + ADP + phosphate + H(+). It carries out the reaction L-aspartyl-tRNA(Asn) + L-glutamine + ATP + H2O = L-asparaginyl-tRNA(Asn) + L-glutamate + ADP + phosphate + 2 H(+). Allows the formation of correctly charged Asn-tRNA(Asn) or Gln-tRNA(Gln) through the transamidation of misacylated Asp-tRNA(Asn) or Glu-tRNA(Gln) in organisms which lack either or both of asparaginyl-tRNA or glutaminyl-tRNA synthetases. The reaction takes place in the presence of glutamine and ATP through an activated phospho-Asp-tRNA(Asn) or phospho-Glu-tRNA(Gln). This chain is Aspartyl/glutamyl-tRNA(Asn/Gln) amidotransferase subunit B, found in Ruegeria sp. (strain TM1040) (Silicibacter sp.).